A 156-amino-acid chain; its full sequence is Small ribosomal subunit protein uS7 (156 aa).

It belongs to the universal ribosomal protein uS7 family. As to quaternary structure, part of the 30S ribosomal subunit. Contacts proteins S9 and S11.

In terms of biological role, one of the primary rRNA binding proteins, it binds directly to 16S rRNA where it nucleates assembly of the head domain of the 30S subunit. Is located at the subunit interface close to the decoding center, probably blocks exit of the E-site tRNA. In Levilactobacillus brevis (strain ATCC 367 / BCRC 12310 / CIP 105137 / JCM 1170 / LMG 11437 / NCIMB 947 / NCTC 947) (Lactobacillus brevis), this protein is Small ribosomal subunit protein uS7.